A 246-amino-acid polypeptide reads, in one-letter code: ATP synthase subunit a, chloroplastic (246 aa).

4 consecutive transmembrane segments (helical) span residues G35–G55, V94–I114, I133–S153, and V202–A222.

It belongs to the ATPase A chain family. F-type ATPases have 2 components, CF(1) - the catalytic core - and CF(0) - the membrane proton channel. CF(1) has five subunits: alpha(3), beta(3), gamma(1), delta(1), epsilon(1). CF(0) has four main subunits: a, b, b' and c.

It is found in the plastid. It localises to the chloroplast thylakoid membrane. In terms of biological role, key component of the proton channel; it plays a direct role in the translocation of protons across the membrane. The sequence is that of ATP synthase subunit a, chloroplastic from Rhodomonas salina (Cryptomonas salina).